The sequence spans 329 residues: Beta-tectorin (329 aa).

Residues 1 to 17 form the signal peptide; that stretch reads MVAVTVYLMVILAQAFA. A ZP domain is found at 19-287; sequence PCTPNKADVI…VTCDKRKQRM (269 aa). N-linked (GlcNAc...) asparagine glycans are attached at residues N80, N104, N116, and N145. C204 and C264 are joined by a disulfide. G304 carries GPI-anchor amidated glycine lipidation. A propeptide spans 305–329 (removed in mature form); sequence LSRFYMLSDVIFHLLFAIGFCAILL.

May form homomeric filament after self-association or heteromeric filament after association with alpha-tectorin. Post-translationally, the N-terminus is blocked. N-glycosylated. In terms of processing, the presence of a hydrophobic C-terminus preceded by a potential cleavage site strongly suggests that tectorins are synthesized as glycosylphosphatidylinositol-linked, membrane-bound precursors. Tectorins are targeted to the apical surface of the inner ear epithelia by the lipid and proteolytically released into the extracellular compartment. In terms of tissue distribution, exclusively expressed in the inner ear, where it is found in basilar papilla, clear cells, supporting cells, cuboidal cells and the lagena macula.

The protein resides in the cell membrane. It localises to the secreted. Its subcellular location is the extracellular space. It is found in the extracellular matrix. One of the major non-collagenous components of the tectorial membrane. The tectorial membrane is an extracellular matrix of the inner ear that covers the neuroepithelium of the cochlea and contacts the stereocilia bundles of specialized sensory hair cells. Sound induces movement of these hair cells relative to the tectorial membrane, deflects the stereocilia and leads to fluctuations in hair-cell membrane potential, transducing sound into electrical signals. The sequence is that of Beta-tectorin (TECTB) from Gallus gallus (Chicken).